A 439-amino-acid chain; its full sequence is MREIIHLQTGQCGNQVGCKFWETISGEHGIDQSGRYVGTSDNQLERVNVYYNEASSKKYVPRAVLIDLEPGTMDAVRQGPFGELFRPDNFVFGQSGAGNNWAKGHYTEGAELIDSVMDVVRKEAESSDCLQGFQITHSLGGGTGAGMGTLLLSKIREDFPDRMICTFSVVPSPKVSDTVVEPYNATLSIHQLVENADETFCIDNEALYDMCFRTLKLNNPGYGDLNHLVSLVMSGVTTCLRFPGQLNAYLRKLAVNMIPFPRLHFFVVGFAPLTAVGTQKFKTYSVSELTQQMFDSKNMMTACDPKKGRYLTVAAMFRGKISMKDVDEQMSMVQSKNSSLFVEWIPSNVKTAVCDIAPTGLEMSATFVGNTTSIQELFKRISDQFTVMFRRKAFLHWYTGEGMDEMEFSEAESNMNDLLSEYQQYQDATVEDAEEFLVN.

Gln11, Glu69, Ser138, Gly142, Thr143, Gly144, Asn204, and Asn226 together coordinate GTP. A Mg(2+)-binding site is contributed by Glu69.

This sequence belongs to the tubulin family. As to quaternary structure, dimer of alpha and beta chains. A typical microtubule is a hollow water-filled tube with an outer diameter of 25 nm and an inner diameter of 15 nM. Alpha-beta heterodimers associate head-to-tail to form protofilaments running lengthwise along the microtubule wall with the beta-tubulin subunit facing the microtubule plus end conferring a structural polarity. Microtubules usually have 13 protofilaments but different protofilament numbers can be found in some organisms and specialized cells. It depends on Mg(2+) as a cofactor.

The protein localises to the cytoplasm. It localises to the cytoskeleton. In terms of biological role, tubulin is the major constituent of microtubules, a cylinder consisting of laterally associated linear protofilaments composed of alpha- and beta-tubulin heterodimers. Microtubules grow by the addition of GTP-tubulin dimers to the microtubule end, where a stabilizing cap forms. Below the cap, tubulin dimers are in GDP-bound state, owing to GTPase activity of alpha-tubulin. The protein is Tubulin beta chain (TUB2) of Encephalitozoon intestinalis (Microsporidian parasite).